The sequence spans 95 residues: Cystatin-A2 (95 aa).

The short motif at 47–51 is the Secondary area of contact element; that stretch reads QLVNG.

Belongs to the cystatin family.

It localises to the cytoplasm. In terms of biological role, intracellular thiol proteinase inhibitor. Inhibits cathepsin B, but not papain. This Dictyostelium discoideum (Social amoeba) protein is Cystatin-A2 (cpiB).